We begin with the raw amino-acid sequence, 204 residues long: VQ motif-containing protein 13 (204 aa).

Positions 1–12 (MEKSPRYRDKAK) are enriched in basic and acidic residues. Residues 1–26 (MEKSPRYRDKAKNLLPSPSSCTTTPT) are disordered. The span at 16 to 26 (PSPSSCTTTPT) shows a compositional bias: low complexity. Residue S17 is modified to Phosphoserine. Residues 46 to 55 (FKQVVQLLTG) carry the VQ motif. A disordered region spans residues 56–90 (IPKNPTHQPDPRFPPFHSIPPIKAVTNKKQSSSFR). 2 positions are modified to phosphoserine: S73 and S128. T131 is modified (phosphothreonine). The tract at residues 133-204 (LMSDPFYRPG…HSPAPSPHDH (72 aa)) is disordered. Positions 143–152 (SFSQSPSDSK) are enriched in low complexity. S147 and S173 each carry phosphoserine. Phosphothreonine is present on residues T177 and T192. Phosphoserine is present on residues S196 and S200.

Phosphorylated on serine and threonine residues by MPK6.

Its subcellular location is the nucleus. Its function is as follows. May modulate WRKY transcription factor activities. The protein is VQ motif-containing protein 13 of Arabidopsis thaliana (Mouse-ear cress).